The following is a 355-amino-acid chain: Lipopolysaccharide heptosyltransferase 1 (355 aa).

Threonine 186, threonine 187, lysine 191, glutamate 221, aspartate 260, threonine 261, glycine 262, and histidine 265 together coordinate ADP-L-glycero-beta-D-manno-heptose.

This sequence belongs to the glycosyltransferase 9 family.

It localises to the cell inner membrane. It carries out the reaction an alpha-Kdo-(2-&gt;4)-alpha-Kdo-(2-&gt;6)-lipid A + ADP-L-glycero-beta-D-manno-heptose = an L-alpha-D-Hep-(1-&gt;5)-[alpha-Kdo-(2-&gt;4)]-alpha-Kdo-(2-&gt;6)-lipid A + ADP + H(+). It participates in bacterial outer membrane biogenesis; LPS core biosynthesis. In terms of biological role, glycosyltransferase involved in the biosynthesis of the core oligosaccharide region of lipopolysaccharide (LPS). Catalyzes the addition of the first heptose unit to one 3-deoxy-D-manno-octulosonic acid (Kdo) residue of the Kdo2-lipid A module. The chain is Lipopolysaccharide heptosyltransferase 1 from Pseudomonas aeruginosa (strain ATCC 15692 / DSM 22644 / CIP 104116 / JCM 14847 / LMG 12228 / 1C / PRS 101 / PAO1).